Reading from the N-terminus, the 210-residue chain is Orotate phosphoribosyltransferase (210 aa).

5-phospho-alpha-D-ribose 1-diphosphate contacts are provided by residues R94, K98, H100, and 120-128 (EDLISTGGS). Position 124 (S124) interacts with orotate.

This sequence belongs to the purine/pyrimidine phosphoribosyltransferase family. PyrE subfamily. In terms of assembly, homodimer. The cofactor is Mg(2+).

The enzyme catalyses orotidine 5'-phosphate + diphosphate = orotate + 5-phospho-alpha-D-ribose 1-diphosphate. Its pathway is pyrimidine metabolism; UMP biosynthesis via de novo pathway; UMP from orotate: step 1/2. Catalyzes the transfer of a ribosyl phosphate group from 5-phosphoribose 1-diphosphate to orotate, leading to the formation of orotidine monophosphate (OMP). In Bacillus cereus (strain ATCC 14579 / DSM 31 / CCUG 7414 / JCM 2152 / NBRC 15305 / NCIMB 9373 / NCTC 2599 / NRRL B-3711), this protein is Orotate phosphoribosyltransferase.